The sequence spans 303 residues: Ribosomal RNA small subunit methyltransferase A (303 aa).

Residues asparagine 37, valine 39, glycine 64, glutamate 85, aspartate 115, and asparagine 138 each contribute to the S-adenosyl-L-methionine site.

It belongs to the class I-like SAM-binding methyltransferase superfamily. rRNA adenine N(6)-methyltransferase family. RsmA subfamily.

Its subcellular location is the cytoplasm. It catalyses the reaction adenosine(1518)/adenosine(1519) in 16S rRNA + 4 S-adenosyl-L-methionine = N(6)-dimethyladenosine(1518)/N(6)-dimethyladenosine(1519) in 16S rRNA + 4 S-adenosyl-L-homocysteine + 4 H(+). In terms of biological role, specifically dimethylates two adjacent adenosines (A1518 and A1519) in the loop of a conserved hairpin near the 3'-end of 16S rRNA in the 30S particle. May play a critical role in biogenesis of 30S subunits. The chain is Ribosomal RNA small subunit methyltransferase A from Bifidobacterium adolescentis (strain ATCC 15703 / DSM 20083 / NCTC 11814 / E194a).